The following is an 84-amino-acid chain: MYB-like transcription factor TCL1 (84 aa).

The Myb-like domain maps to T36–W73.

As to expression, expressed in inflorescences and trichomes of rosette and cauline leaves.

The protein resides in the nucleus. Its function is as follows. MYB-type transcription factor involved in trichome cell specification. Acts as a negative regulator of trichome patterning and formation by direct binding to the cis-acting regulatory elements of GL1, thus suppressing the expression of GL1. The protein is MYB-like transcription factor TCL1 (TCL1) of Arabidopsis thaliana (Mouse-ear cress).